The sequence spans 290 residues: Bifunctional protein FolD 1 (290 aa).

Residues 172–174 (GAS) and Ile238 contribute to the NADP(+) site.

The protein belongs to the tetrahydrofolate dehydrogenase/cyclohydrolase family. Homodimer.

It carries out the reaction (6R)-5,10-methylene-5,6,7,8-tetrahydrofolate + NADP(+) = (6R)-5,10-methenyltetrahydrofolate + NADPH. It catalyses the reaction (6R)-5,10-methenyltetrahydrofolate + H2O = (6R)-10-formyltetrahydrofolate + H(+). Its pathway is one-carbon metabolism; tetrahydrofolate interconversion. In terms of biological role, catalyzes the oxidation of 5,10-methylenetetrahydrofolate to 5,10-methenyltetrahydrofolate and then the hydrolysis of 5,10-methenyltetrahydrofolate to 10-formyltetrahydrofolate. The sequence is that of Bifunctional protein FolD 1 from Pseudomonas putida (strain GB-1).